The chain runs to 401 residues: Chalcone synthase 5 (401 aa).

Cys-168 is a catalytic residue.

Belongs to the thiolase-like superfamily. Chalcone/stilbene synthases family.

The catalysed reaction is (E)-4-coumaroyl-CoA + 3 malonyl-CoA + 3 H(+) = 2',4,4',6'-tetrahydroxychalcone + 3 CO2 + 4 CoA. Its pathway is secondary metabolite biosynthesis; flavonoid biosynthesis. Functionally, the primary product of this enzyme is 4,2',4',6'-tetrahydroxychalcone (also termed naringenin-chalcone or chalcone) which can under specific conditions spontaneously isomerize into naringenin. The sequence is that of Chalcone synthase 5 (CHS5) from Sorghum bicolor (Sorghum).